Consider the following 34-residue polypeptide: Photosystem II reaction center protein M (34 aa).

The helical transmembrane segment at 5 to 25 threads the bilayer; it reads ILALIAIALFISVPTAFLIII.

It belongs to the PsbM family. As to quaternary structure, PSII is composed of 1 copy each of membrane proteins PsbA, PsbB, PsbC, PsbD, PsbE, PsbF, PsbH, PsbI, PsbJ, PsbK, PsbL, PsbM, PsbT, PsbX, PsbY, PsbZ, Psb30/Ycf12, at least 3 peripheral proteins of the oxygen-evolving complex and a large number of cofactors. It forms dimeric complexes.

The protein localises to the plastid. Its subcellular location is the chloroplast thylakoid membrane. One of the components of the core complex of photosystem II (PSII). PSII is a light-driven water:plastoquinone oxidoreductase that uses light energy to abstract electrons from H(2)O, generating O(2) and a proton gradient subsequently used for ATP formation. It consists of a core antenna complex that captures photons, and an electron transfer chain that converts photonic excitation into a charge separation. This subunit is found at the monomer-monomer interface. The chain is Photosystem II reaction center protein M from Gnetum parvifolium (Small-leaved jointfir).